We begin with the raw amino-acid sequence, 82 residues long: Sigma-G-dependent sporulation-specific SASP protein (82 aa).

The sequence is that of Sigma-G-dependent sporulation-specific SASP protein from Bacillus subtilis (strain 168).